The chain runs to 511 residues: Sphingosine-1-phosphate transporter MFSD2B (511 aa).

9 helical membrane-spanning segments follow: residues 108–128 (MPWMLGCTPFLVVSYFLLWFV), 136–156 (VLWYLAFFSCFQALSTAYHVP), 236–256 (IAAGIIGCLYLLCISVLFLGV), 280–300 (TMQFGPYLNLISSFLLISAAV), 323–343 (NLVLTILIAAVLSIPFWQWFL), 357–377 (LMIPFSIMLVTISSLVVAYVV), 379–399 (VASGLSIAASLLLPWSMLPDV), 415–435 (AIFYSSFVFFTKLSAGIALGI), and 462–482 (LLIGAAPALMIIIGLTILAFY).

The protein belongs to the major facilitator superfamily.

The protein resides in the cell membrane. The catalysed reaction is sphing-4-enine 1-phosphate(in) = sphing-4-enine 1-phosphate(out). It catalyses the reaction sphinganine 1-phosphate(in) = sphinganine 1-phosphate(out). It carries out the reaction sphinga-4E,14Z-dienine-1-phosphate(in) = sphinga-4E,14Z-dienine-1-phosphate(out). Its function is as follows. Lipid transporter that specifically mediates export of sphingosine-1-phosphate in red blood cells and platelets. Sphingosine-1-phosphate is a signaling sphingolipid and its export from red blood cells into in the plasma is required for red blood cell morphology. Sphingosine-1-phosphate export from platelets is required for platelet aggregation and thrombus formation. In addition to export, also able to mediate S1P import. In Xenopus tropicalis (Western clawed frog), this protein is Sphingosine-1-phosphate transporter MFSD2B.